The chain runs to 359 residues: Mitochondrial glutathione transporter SLC25A39 (359 aa).

Over 1–18 (MGDRPAVRISAAITPVQQ) the chain is Mitochondrial intermembrane. Solcar repeat units lie at residues 13–149 (ITPV…LRDF), 157–241 (HGDH…VKAQ), and 251–346 (ASFT…GKTF). Residues 19–39 (MLASGTGAVLTSLFVTPLDVV) form a helical membrane-spanning segment. Topologically, residues 40–119 (KIRLQAQQTP…VKITHNEGLR (80 aa)) are mitochondrial matrix. 4 residues coordinate [2Fe-2S] cluster: cysteine 72, cysteine 76, cysteine 86, and cysteine 92. Residues 120–140 (SLWSGLPPTLVMAVPATVIYF) form a helical membrane-spanning segment. The Mitochondrial intermembrane portion of the chain corresponds to 141 to 162 (TCYDQLRDFLCYSMGYHGDHIP). Residues 163 to 183 (LIAGGLARLGAVSVISPLELV) form a helical membrane-spanning segment. The Mitochondrial matrix portion of the chain corresponds to 184 to 212 (RTKMQSRRLQYSELMVCIRSSVAQDGWLS). A helical membrane pass occupies residues 213 to 233 (LWRGWGPTVLRDVPFSALYWF). Residues 234-253 (NYELVKAQLCEHYRTPQASF) lie on the Mitochondrial intermembrane side of the membrane. Residues 254-274 (TISFTAGAVSGAIAAVLTLPF) traverse the membrane as a helical segment. Residues 275 to 316 (DVVKTRRQIQLGEMEALGAVSMKKPSSTWNMMRNIWIDMGYK) lie on the Mitochondrial matrix side of the membrane. A helical transmembrane segment spans residues 317 to 337 (GLFAGFLPRVIKVAPACAVMI). Residues 338–359 (STYEFGKTFFQERNLHQARCGL) lie on the Mitochondrial intermembrane side of the membrane.

It belongs to the mitochondrial carrier (TC 2.A.29) family. In terms of processing, cleaved and degraded by AFG3L2; degradation by AFG3L2 is regulated by the ability of SLC25A39 to bind iron-sulfur. In absence of mitochondrial glutathione, SLC25A39 binds iron-sulfur, preventing cleavage and degradation by AFG3L2. The presence of mitochondrial glutathione prevents iron-sulfur-binding to SLC25A39, promoting cleavage and degradation by AFG3L2.

The protein resides in the mitochondrion inner membrane. The enzyme catalyses glutathione(in) = glutathione(out). Its activity is regulated as follows. The activity of SLC25A39 is regulated by levels of mitochondrial glutathione via its ability to bind [2Fe-2S] iron-sulfur cluster. Upon physiological levels of mitochondrial glutathione, glutathione prevents iron-sulfur-binding to SLC25A39 promoting cleavage and degradation by AFG3L2. Upon depletion of mitochondrial glutathione, SLC25A39 binds iron-sulfur, preventing cleavage and degradation by AFG3L2. In terms of biological role, mitochondrial transporter required for glutathione import into mitochondria. Glutathione, which plays key roles in oxidative metabolism, is produced exclusively in the cytosol and is imported in many organelles. Mitochondrial glutathione is required for the activity and stability of proteins containing iron-sulfur clusters, as well as erythropoiesis. Involved in the early steps of heme biosynthesis. This Danio rerio (Zebrafish) protein is Mitochondrial glutathione transporter SLC25A39 (slc25a39).